A 376-amino-acid chain; its full sequence is Protein MGF 360-7L (376 aa).

The protein belongs to the asfivirus MGF 360 family.

Functionally, plays a role in virus cell tropism, and may be required for efficient virus replication in macrophages. This chain is Protein MGF 360-7L, found in Ornithodoros (relapsing fever ticks).